Consider the following 325-residue polypeptide: 5-dehydro-2-deoxygluconokinase (325 aa).

The protein belongs to the carbohydrate kinase PfkB family.

The enzyme catalyses 5-dehydro-2-deoxy-D-gluconate + ATP = 6-phospho-5-dehydro-2-deoxy-D-gluconate + ADP + H(+). Its pathway is polyol metabolism; myo-inositol degradation into acetyl-CoA; acetyl-CoA from myo-inositol: step 5/7. Catalyzes the phosphorylation of 5-dehydro-2-deoxy-D-gluconate (2-deoxy-5-keto-D-gluconate or DKG) to 6-phospho-5-dehydro-2-deoxy-D-gluconate (DKGP). The polypeptide is 5-dehydro-2-deoxygluconokinase (Listeria monocytogenes serovar 1/2a (strain ATCC BAA-679 / EGD-e)).